Consider the following 300-residue polypeptide: MTDSIPHIPVLVKESLSLFRGRNPVVFCDVTVGAGGHAEAFLTEFPSIERYDGSDRDLSALALSENRLLPFKDRVRLRHASFEEVDTLTSDGTYDGVLADLGVSSMQLNNLERGFSFQGEDHPLDMRMDTSRGMTASEVLNSLREEEIGEIFRNYGEEPLWRSAAAAVVHFRKKKKILTVKDLKDATSGVFPSYRLRKKIHPLTLIFQALRIYVNQEGAQLKVLLDSAFRWLRPGGRLAVISFCSLDDRPVKWAFREAEARGLGKILTKKVIMPSYEETRMNPRSRSAKLRCFEKSFEDK.

S-adenosyl-L-methionine-binding positions include G35–H37, D55, F82, D100, and Q107.

The protein belongs to the methyltransferase superfamily. RsmH family.

Its subcellular location is the cytoplasm. It catalyses the reaction cytidine(1402) in 16S rRNA + S-adenosyl-L-methionine = N(4)-methylcytidine(1402) in 16S rRNA + S-adenosyl-L-homocysteine + H(+). Functionally, specifically methylates the N4 position of cytidine in position 1402 (C1402) of 16S rRNA. The protein is Ribosomal RNA small subunit methyltransferase H of Chlamydia trachomatis serovar L2 (strain ATCC VR-902B / DSM 19102 / 434/Bu).